Consider the following 858-residue polypeptide: Leucine--tRNA ligase (858 aa).

Positions 42–52 (PYPSGRLHMGH) match the 'HIGH' region motif. The short motif at 618 to 622 (KMSKS) is the 'KMSKS' region element. Lysine 621 is a binding site for ATP.

Belongs to the class-I aminoacyl-tRNA synthetase family.

It localises to the cytoplasm. It carries out the reaction tRNA(Leu) + L-leucine + ATP = L-leucyl-tRNA(Leu) + AMP + diphosphate. The protein is Leucine--tRNA ligase of Vibrio cholerae serotype O1 (strain ATCC 39541 / Classical Ogawa 395 / O395).